The primary structure comprises 428 residues: D-amino acid dehydrogenase (428 aa).

3–17 lines the FAD pocket; the sequence is VVILGSGVVGVASAY.

The protein belongs to the DadA oxidoreductase family. FAD is required as a cofactor.

It catalyses the reaction a D-alpha-amino acid + A + H2O = a 2-oxocarboxylate + AH2 + NH4(+). Its pathway is amino-acid degradation; D-alanine degradation; NH(3) and pyruvate from D-alanine: step 1/1. Functionally, oxidative deamination of D-amino acids. The chain is D-amino acid dehydrogenase from Burkholderia vietnamiensis (strain G4 / LMG 22486) (Burkholderia cepacia (strain R1808)).